The chain runs to 485 residues: Aspartyl/glutamyl-tRNA(Asn/Gln) amidotransferase subunit B (485 aa).

This sequence belongs to the GatB/GatE family. GatB subfamily. As to quaternary structure, heterotrimer of A, B and C subunits.

The catalysed reaction is L-glutamyl-tRNA(Gln) + L-glutamine + ATP + H2O = L-glutaminyl-tRNA(Gln) + L-glutamate + ADP + phosphate + H(+). It carries out the reaction L-aspartyl-tRNA(Asn) + L-glutamine + ATP + H2O = L-asparaginyl-tRNA(Asn) + L-glutamate + ADP + phosphate + 2 H(+). Allows the formation of correctly charged Asn-tRNA(Asn) or Gln-tRNA(Gln) through the transamidation of misacylated Asp-tRNA(Asn) or Glu-tRNA(Gln) in organisms which lack either or both of asparaginyl-tRNA or glutaminyl-tRNA synthetases. The reaction takes place in the presence of glutamine and ATP through an activated phospho-Asp-tRNA(Asn) or phospho-Glu-tRNA(Gln). The protein is Aspartyl/glutamyl-tRNA(Asn/Gln) amidotransferase subunit B of Cupriavidus pinatubonensis (strain JMP 134 / LMG 1197) (Cupriavidus necator (strain JMP 134)).